Reading from the N-terminus, the 217-residue chain is Large ribosomal subunit protein uL3 (217 aa).

The span at 133–145 (GRASHGNSRSHNV) shows a compositional bias: polar residues. The interval 133 to 153 (GRASHGNSRSHNVPGSIGMAQ) is disordered. An N5-methylglutamine modification is found at Gln153.

The protein belongs to the universal ribosomal protein uL3 family. Part of the 50S ribosomal subunit. Forms a cluster with proteins L14 and L19. Methylated by PrmB.

Its function is as follows. One of the primary rRNA binding proteins, it binds directly near the 3'-end of the 23S rRNA, where it nucleates assembly of the 50S subunit. This Ralstonia pickettii (strain 12J) protein is Large ribosomal subunit protein uL3.